A 437-amino-acid polypeptide reads, in one-letter code: Phosphoethanolamine N-methyltransferase 2 (437 aa).

N-methylethanolamine phosphate contacts are provided by residues 186–187 and Tyr195; that span reads QY. Residues 204 to 205, Gly232, Asp254, 281 to 282, and Arg298 each bind S-adenosyl-L-homocysteine; these read IS and DA. Residues Tyr329, Tyr343, 347–349, and Lys415 contribute to the N-methylethanolamine phosphate site; that span reads RAY.

Belongs to the class I-like SAM-binding methyltransferase superfamily.

It carries out the reaction N-methylethanolamine phosphate + S-adenosyl-L-methionine = N,N-dimethylethanolamine phosphate + S-adenosyl-L-homocysteine + H(+). The catalysed reaction is N,N-dimethylethanolamine phosphate + S-adenosyl-L-methionine = phosphocholine + S-adenosyl-L-homocysteine + H(+). Its pathway is phospholipid metabolism; phosphatidylcholine biosynthesis; phosphocholine from phosphoethanolamine. Feedback inhibition by phosphatidylcholine and also by S-adenosylhomocysteine. Its function is as follows. Catalyzes the last two methylation reactions in the synthesis of phosphocholine, by converting phospho-monomethylethanolamine (N-methylethanolamine phosphate) into phospho-dimethylethanolamine (N,N-dimethylethanolamine phosphate) and the latter into phosphocholine. Phosphocholine is a precursor for phosphatidylcholine, a major component in membranes and a precursor itself in the production of glycoconjugates secreted by parasitic nematodes to avoid host immune responses. The chain is Phosphoethanolamine N-methyltransferase 2 from Caenorhabditis elegans.